The primary structure comprises 483 residues: GTPase Der (483 aa).

2 EngA-type G domains span residues 3–167 and 212–387; these read FTLA…GEER and LRIA…EIWN. GTP contacts are provided by residues 9-16, 56-60, 119-122, 218-225, 265-269, and 330-333; these read GRPNVGKS, DTAGL, NKAE, GRPNAGKS, DTAGM, and NKWD. In terms of domain architecture, KH-like spans 388–472; that stretch reads RRISTGRLNR…PIRLSLRTSD (85 aa).

This sequence belongs to the TRAFAC class TrmE-Era-EngA-EngB-Septin-like GTPase superfamily. EngA (Der) GTPase family. As to quaternary structure, associates with the 50S ribosomal subunit.

Its function is as follows. GTPase that plays an essential role in the late steps of ribosome biogenesis. The polypeptide is GTPase Der (Brucella ovis (strain ATCC 25840 / 63/290 / NCTC 10512)).